The sequence spans 353 residues: DNA polymerase IV (353 aa).

The UmuC domain maps to 4 to 185; sequence IIHVDMDCFF…LPLSKIPGVG (182 aa). 2 residues coordinate Mg(2+): Asp8 and Asp103. The active site involves Glu104.

This sequence belongs to the DNA polymerase type-Y family. As to quaternary structure, monomer. The cofactor is Mg(2+).

The protein resides in the cytoplasm. The catalysed reaction is DNA(n) + a 2'-deoxyribonucleoside 5'-triphosphate = DNA(n+1) + diphosphate. Its function is as follows. Poorly processive, error-prone DNA polymerase involved in untargeted mutagenesis. Copies undamaged DNA at stalled replication forks, which arise in vivo from mismatched or misaligned primer ends. These misaligned primers can be extended by PolIV. Exhibits no 3'-5' exonuclease (proofreading) activity. May be involved in translesional synthesis, in conjunction with the beta clamp from PolIII. The chain is DNA polymerase IV from Serratia proteamaculans (strain 568).